We begin with the raw amino-acid sequence, 110 residues long: Large ribosomal subunit protein uL22 (110 aa).

The protein belongs to the universal ribosomal protein uL22 family. As to quaternary structure, part of the 50S ribosomal subunit.

Its function is as follows. This protein binds specifically to 23S rRNA; its binding is stimulated by other ribosomal proteins, e.g. L4, L17, and L20. It is important during the early stages of 50S assembly. It makes multiple contacts with different domains of the 23S rRNA in the assembled 50S subunit and ribosome. The globular domain of the protein is located near the polypeptide exit tunnel on the outside of the subunit, while an extended beta-hairpin is found that lines the wall of the exit tunnel in the center of the 70S ribosome. This chain is Large ribosomal subunit protein uL22, found in Saccharophagus degradans (strain 2-40 / ATCC 43961 / DSM 17024).